Consider the following 328-residue polypeptide: Malate dehydrogenase (328 aa).

12 to 18 (GAAGQIG) lines the NAD(+) pocket. 2 residues coordinate substrate: Arg-93 and Arg-99. Residues Asn-106, Gln-113, and 130–132 (VGN) contribute to the NAD(+) site. Substrate contacts are provided by Asn-132 and Arg-166. His-191 acts as the Proton acceptor in catalysis.

This sequence belongs to the LDH/MDH superfamily. MDH type 2 family.

The enzyme catalyses (S)-malate + NAD(+) = oxaloacetate + NADH + H(+). Its function is as follows. Catalyzes the reversible oxidation of malate to oxaloacetate. The polypeptide is Malate dehydrogenase (Dechloromonas aromatica (strain RCB)).